Here is a 434-residue protein sequence, read N- to C-terminus: Nucleobase transporter PlUacP (434 aa).

12 consecutive transmembrane segments (helical) span residues L9–G29, L39–W59, F63–I83, A93–G113, F118–V138, A159–I179, A181–V201, F218–I238, V306–L326, T327–V347, L365–F385, and I394–F414.

Belongs to the nucleobase:cation symporter-2 (NCS2) (TC 2.A.40) family.

Its subcellular location is the cell membrane. Its activity is regulated as follows. Inhibited by the proton gradient disruptor carbonyl cyanide m-chlorophenylhydrazone (CCCP), but not by the sodium gradient disruptor ouabain. Hypoxanthine, xanthine, cytosine and uric acid act as competitive inhibitors. Its function is as follows. Uptake of the purines adenine and guanine, and the pyrimidine uracil. Transport is probably proton-dependent. This is Nucleobase transporter PlUacP from Paenibacillus larvae subsp. larvae (strain NRRL B-3650 / LMG 16245).